A 201-amino-acid polypeptide reads, in one-letter code: Small ribosomal subunit protein uS4 (201 aa).

A disordered region spans residues 1–46; sequence MARYTGPRSRISRRFGEPVMGDSKALQKKNYAPGMHGRNKKRKQSE. The 60-residue stretch at 92 to 151 folds into the S4 RNA-binding domain; it reads ARLDNTVYRLGIASSRRAARQLVIHKHIVVNGDVVNIPSYQLKPGDQLGVREKSKSIEAI.

This sequence belongs to the universal ribosomal protein uS4 family. Part of the 30S ribosomal subunit. Contacts protein S5. The interaction surface between S4 and S5 is involved in control of translational fidelity.

One of the primary rRNA binding proteins, it binds directly to 16S rRNA where it nucleates assembly of the body of the 30S subunit. Its function is as follows. With S5 and S12 plays an important role in translational accuracy. This is Small ribosomal subunit protein uS4 from Cytophaga hutchinsonii (strain ATCC 33406 / DSM 1761 / CIP 103989 / NBRC 15051 / NCIMB 9469 / D465).